The following is a 130-amino-acid chain: MSEKFEYGTGRRKTATARTRIYAGSGGITVNGRSFENYFPRKTLQMIIRQPLVLAKLADKLDVRVNVAGGGVTGQAEAVRHGISRALLLVDPALRPVLKKAGFLTRDARKKERKKYGLRAARARYQYSKR.

It belongs to the universal ribosomal protein uS9 family.

This chain is Small ribosomal subunit protein uS9, found in Desulfovibrio desulfuricans (strain ATCC 27774 / DSM 6949 / MB).